Reading from the N-terminus, the 81-residue chain is Short neurotoxin B (81 aa).

The signal sequence occupies residues 1–21 (MKTLLLTLVVVTIVCLDLGYT). 4 disulfide bridges follow: cysteine 24–cysteine 43, cysteine 38–cysteine 60, cysteine 62–cysteine 73, and cysteine 74–cysteine 79.

Belongs to the three-finger toxin family. Short-chain subfamily. Type I alpha-neurotoxin sub-subfamily. In terms of tissue distribution, expressed by the venom gland.

It localises to the secreted. Its function is as follows. Binds to muscle nicotinic acetylcholine receptor (nAChR) and inhibit acetylcholine from binding to the receptor, thereby impairing neuromuscular transmission. In Aipysurus laevis (Olive sea snake), this protein is Short neurotoxin B.